We begin with the raw amino-acid sequence, 243 residues long: Small ribosomal subunit protein uS3 (243 aa).

Positions 22-93 (LNEFLTRELA…SVELYAEKVA (72 aa)) constitute a KH type-2 domain. Positions 195–243 (QQGKNGPKKPQPDHILVTEPKDEPAPLEPTSDIRSLAPAPLPQPVAAVA) are disordered.

It belongs to the universal ribosomal protein uS3 family.

This Manduca sexta (Tobacco hawkmoth) protein is Small ribosomal subunit protein uS3 (RpS3).